The sequence spans 335 residues: Polyprenol dehydrogenase (335 aa).

NAD(+)-binding residues include Ile55, Tyr208, Lys212, and Thr245. Residue Tyr208 is the Proton acceptor of the active site.

This sequence belongs to the short-chain dehydrogenases/reductases (SDR) family.

It localises to the lipid droplet. The protein resides in the secreted. The catalysed reaction is a di-trans,poly-cis-polyprenol + NAD(+) = a di-trans,poly-cis-polyprenal + NADH + H(+). It carries out the reaction a di-trans,poly-cis-polyprenol + NADP(+) = a di-trans,poly-cis-polyprenal + NADPH + H(+). It catalyses the reaction a di-trans,poly-cis-dolichol + NADP(+) = a di-trans,poly-cis-dolichal + NADPH + H(+). The enzyme catalyses a di-trans,poly-cis-dolichol + NAD(+) = a di-trans,poly-cis-dolichal + NADH + H(+). It functions in the pathway protein modification; protein glycosylation. Functionally, oxidoreductase that plays a key role in early steps of protein N-linked glycosylation by mediating two non-consecutive steps in dolichol biosynthesis. Acts both as a NAD(+)-dependent dehydrogenase and as a NADPH-dependent reductase during the conversion of polyprenol into dolichol. First catalyzes the NAD(+)-dependent dehydrogenation of polyprenol into polyprenal; polyprenal is then reduced into dolichal by SRD5A3. It then catalyzes the NADPH-dependent reduction of dolichal into dolichol. May also acts as a positive regulator of starvation-induced autophagy. The protein is Polyprenol dehydrogenase (Dhrsx) of Mus musculus (Mouse).